A 133-amino-acid polypeptide reads, in one-letter code: S-protein homolog 9 (133 aa).

A signal peptide spans 1-20 (MNRLSCFLLVIGLCIGLSNA).

It belongs to the plant self-incompatibility (S1) protein family.

Its subcellular location is the secreted. The chain is S-protein homolog 9 from Arabidopsis thaliana (Mouse-ear cress).